We begin with the raw amino-acid sequence, 301 residues long: MSGSPDLVLETDFPGLKLLNRGKVRDIYDLGDSLLIVATDRISAFDVIMPNPVPDKGRILTRITEFWLRFLSDVTENHLISSDVSRYPEQCRPYERVLAGRSMWVKKARVFPVECIVRGYLAGSGWEDYRKTGQVCGIALPAGLQEAQQLPEPIFTPSTKATLGEHDENISFDAMAAAIGEEMAQGVRDVTIKVYLKASSYARQRGIILADTKFEFGLVEGRLTLVDEVLTPDSSRFWPADRYRVGSSPESFDKQYLRDYLVRSGWKKTDPPPVLPPDVVENTRKRYLEALERLSGHGLEG.

This sequence belongs to the SAICAR synthetase family.

It catalyses the reaction 5-amino-1-(5-phospho-D-ribosyl)imidazole-4-carboxylate + L-aspartate + ATP = (2S)-2-[5-amino-1-(5-phospho-beta-D-ribosyl)imidazole-4-carboxamido]succinate + ADP + phosphate + 2 H(+). It functions in the pathway purine metabolism; IMP biosynthesis via de novo pathway; 5-amino-1-(5-phospho-D-ribosyl)imidazole-4-carboxamide from 5-amino-1-(5-phospho-D-ribosyl)imidazole-4-carboxylate: step 1/2. The polypeptide is Phosphoribosylaminoimidazole-succinocarboxamide synthase (Syntrophobacter fumaroxidans (strain DSM 10017 / MPOB)).